The chain runs to 105 residues: Large ribosomal subunit protein eL36 (105 aa).

Lysine 62 is subject to N6-acetyllysine.

It belongs to the eukaryotic ribosomal protein eL36 family. In terms of assembly, component of the large ribosomal subunit.

It is found in the cytoplasm. Its subcellular location is the cytosol. In terms of biological role, component of the large ribosomal subunit. The ribosome is a large ribonucleoprotein complex responsible for the synthesis of proteins in the cell. This Homo sapiens (Human) protein is Large ribosomal subunit protein eL36 (RPL36).